The sequence spans 391 residues: 4-hydroxy-3-methylbut-2-en-1-yl diphosphate synthase (flavodoxin) (391 aa).

4 residues coordinate [4Fe-4S] cluster: Cys-281, Cys-284, Cys-316, and Glu-323. A disordered region spans residues 372-391; the sequence is EMGGEDGQGGIKGSPVVSVS.

The protein belongs to the IspG family. [4Fe-4S] cluster serves as cofactor.

The enzyme catalyses (2E)-4-hydroxy-3-methylbut-2-enyl diphosphate + oxidized [flavodoxin] + H2O + 2 H(+) = 2-C-methyl-D-erythritol 2,4-cyclic diphosphate + reduced [flavodoxin]. It participates in isoprenoid biosynthesis; isopentenyl diphosphate biosynthesis via DXP pathway; isopentenyl diphosphate from 1-deoxy-D-xylulose 5-phosphate: step 5/6. Its function is as follows. Converts 2C-methyl-D-erythritol 2,4-cyclodiphosphate (ME-2,4cPP) into 1-hydroxy-2-methyl-2-(E)-butenyl 4-diphosphate. In Renibacterium salmoninarum (strain ATCC 33209 / DSM 20767 / JCM 11484 / NBRC 15589 / NCIMB 2235), this protein is 4-hydroxy-3-methylbut-2-en-1-yl diphosphate synthase (flavodoxin).